A 92-amino-acid chain; its full sequence is Small ribosomal subunit protein uS19c (92 aa).

This sequence belongs to the universal ribosomal protein uS19 family.

It is found in the plastid. Its subcellular location is the chloroplast. Protein S19 forms a complex with S13 that binds strongly to the 16S ribosomal RNA. This chain is Small ribosomal subunit protein uS19c, found in Morus indica (Mulberry).